A 1207-amino-acid polypeptide reads, in one-letter code: RNA-binding protein 20 (1207 aa).

Residues 1–58 are disordered; that stretch reads MVLAAAMSQDADPSGPEQPDRDACIVPGVQGPPAPQGQQGMQPLPPPLPPPPQPQSSL. Residues 43-54 show a composition bias toward pro residues; that stretch reads PLPPPLPPPPQP. A U1-type zinc finger spans residues 412–446; that stretch reads HLPHICSICDKKVFDLKDWELHVKGKLHAQKCLLF. Positions 521–596 constitute an RRM domain; the sequence is RVVHICNLPE…EKLLIRMSTR (76 aa). Residues 625 to 637 are compositionally biased toward basic and acidic residues; that stretch reads LREADRYGPERPR. Disordered stretches follow at residues 625 to 686, 722 to 896, and 951 to 1110; these read LREA…NGED, EKYL…MEEL, and QGET…AELK. The RS stretch occupies residues 631 to 650; sequence YGPERPRSRSPMSRSLSPRS. 5 positions are modified to phosphoserine: Ser638, Ser640, Ser643, Ser645, and Ser652. The segment covering 639-650 has biased composition (low complexity); that stretch reads RSPMSRSLSPRS. Residues 668 to 686 are compositionally biased toward basic and acidic residues; sequence YAWRDEDRETVPRRENGED. Residue Ser729 is modified to Phosphoserine. Basic and acidic residues-rich tracts occupy residues 740–759, 772–789, and 796–836; these read KGRE…DKHP, RKEE…PEDS, and EPKV…RGAE. Ser789 bears the Phosphoserine mark. Over residues 839-848 the composition is skewed to acidic residues; sequence AGTEEQEGME. 2 positions are modified to phosphoserine: Ser853 and Ser864. Polar residues predominate over residues 853 to 863; sequence SVGTQQEGTES. The span at 867–876 shows a compositional bias: basic and acidic residues; the sequence is ENTRTKKGQD. Phosphoserine occurs at positions 879, 881, and 963. Residues 970-979 show a composition bias toward polar residues; that stretch reads VPSTSTSCPN. At Ser999 the chain carries Phosphoserine. The span at 1011-1022 shows a compositional bias: basic and acidic residues; that stretch reads YEKEARGAEGSD. 7 positions are modified to phosphoserine: Ser1034, Ser1046, Ser1057, Ser1066, Ser1078, Ser1096, and Ser1101. Residues 1050-1072 are compositionally biased toward basic and acidic residues; the sequence is DDCKARGSPEDGPHEVSPLEEKA. Over residues 1073–1102 the composition is skewed to polar residues; sequence SPTTESDLQSQACQENSRYTETRSLNSRSP. The Matrin-type zinc-finger motif lies at 1141 to 1172; the sequence is FYCKLCGLFYTSEEAAKVSHCRSTVHYRNLQK. Positions 1181 to 1207 are disordered; it reads GLKETEGVDSPSPERSGIGPHLERKKL. A phosphoserine mark is found at Ser1190 and Ser1192.

In terms of assembly, associates with components of the U1 and U2 U1 small nuclear ribonucleoprotein complexes. Phosphorylation regulates the subcellular localization. Phosphorylation of Ser-638 and Ser-640 in the RS (arginine/serine-rich) region promotes nuclear localization of the protein. In contrast, phosphorylation of the C-terminal disordered region promotes localization to cytoplasmic ribonucleoprotein granules.

It is found in the nucleus. Its subcellular location is the cytoplasm. The protein resides in the cytoplasmic ribonucleoprotein granule. RNA-binding protein that acts as a regulator of mRNA splicing of a subset of genes encoding key structural proteins involved in cardiac development, such as TTN (Titin), CACNA1C, CAMK2D or PDLIM5/ENH. Acts as a repressor of mRNA splicing: specifically binds the 5'UCUU-3' motif that is predominantly found within intronic sequences of pre-mRNAs, leading to the exclusion of specific exons in target transcripts. RBM20-mediated exon skipping is hormone-dependent and is essential for TTN isoform transition in both cardiac and skeletal muscles. RBM20-mediated exon skipping of TTN provides substrates for the formation of circular RNA (circRNAs) from the TTN transcripts. Together with RBM24, promotes the expression of short isoforms of PDLIM5/ENH in cardiomyocytes. The chain is RNA-binding protein 20 from Rattus norvegicus (Rat).